We begin with the raw amino-acid sequence, 123 residues long: Small ribosomal subunit protein uS12 (123 aa).

At Asp-89 the chain carries 3-methylthioaspartic acid.

The protein belongs to the universal ribosomal protein uS12 family. Part of the 30S ribosomal subunit. Contacts proteins S8 and S17. May interact with IF1 in the 30S initiation complex.

With S4 and S5 plays an important role in translational accuracy. Functionally, interacts with and stabilizes bases of the 16S rRNA that are involved in tRNA selection in the A site and with the mRNA backbone. Located at the interface of the 30S and 50S subunits, it traverses the body of the 30S subunit contacting proteins on the other side and probably holding the rRNA structure together. The combined cluster of proteins S8, S12 and S17 appears to hold together the shoulder and platform of the 30S subunit. This is Small ribosomal subunit protein uS12 from Brucella abortus (strain S19).